A 76-amino-acid polypeptide reads, in one-letter code: Small ribosomal subunit protein bS18 (76 aa).

It belongs to the bacterial ribosomal protein bS18 family. Part of the 30S ribosomal subunit. Forms a tight heterodimer with protein bS6.

In terms of biological role, binds as a heterodimer with protein bS6 to the central domain of the 16S rRNA, where it helps stabilize the platform of the 30S subunit. The polypeptide is Small ribosomal subunit protein bS18 (Aeromonas hydrophila subsp. hydrophila (strain ATCC 7966 / DSM 30187 / BCRC 13018 / CCUG 14551 / JCM 1027 / KCTC 2358 / NCIMB 9240 / NCTC 8049)).